The primary structure comprises 968 residues: RNA polymerase-associated protein RapA (968 aa).

Residues aspartate 164–asparagine 334 enclose the Helicase ATP-binding domain. Residue aspartate 177–threonine 184 coordinates ATP. A DEAH box motif is present at residues aspartate 280–histidine 283. The 196-residue stretch at arginine 490 to arginine 685 folds into the Helicase C-terminal domain.

This sequence belongs to the SNF2/RAD54 helicase family. RapA subfamily. As to quaternary structure, interacts with the RNAP. Has a higher affinity for the core RNAP than for the holoenzyme. Its ATPase activity is stimulated by binding to RNAP.

Its function is as follows. Transcription regulator that activates transcription by stimulating RNA polymerase (RNAP) recycling in case of stress conditions such as supercoiled DNA or high salt concentrations. Probably acts by releasing the RNAP, when it is trapped or immobilized on tightly supercoiled DNA. Does not activate transcription on linear DNA. Probably not involved in DNA repair. In Salmonella typhi, this protein is RNA polymerase-associated protein RapA.